We begin with the raw amino-acid sequence, 384 residues long: UDP-galactopyranose mutase (384 aa).

Residues 1–23 (MKSKKILIVGAGFSGAVIGRQLA) form the signal peptide. FAD is bound by residues Ser-14, 33-34 (DQ), Asn-41, and 60-61 (HI). Residues Asn-84, Phe-151, Thr-156, Trp-160, and Tyr-185 each coordinate UDP-alpha-D-galactose. Phe-219 is a binding site for FAD. UDP-alpha-D-galactose contacts are provided by Asn-270, Arg-280, and Tyr-314. Arg-343 provides a ligand contact to FAD. Position 349 (Tyr-349) interacts with UDP-alpha-D-galactose. 350–355 (LDMDVT) lines the FAD pocket.

This sequence belongs to the UDP-galactopyranose/dTDP-fucopyranose mutase family. As to quaternary structure, homodimer. FAD serves as cofactor.

The catalysed reaction is UDP-alpha-D-galactose = UDP-alpha-D-galactofuranose. It functions in the pathway bacterial outer membrane biogenesis; LPS O-antigen biosynthesis. In terms of biological role, involved in the biosynthesis of the galactose-containing O-side-chain polysaccharide backbone structure of D-galactan I which is a key component of lipopolysaccharide (LPS). Catalyzes the interconversion through a 2-keto intermediate of uridine diphosphogalactopyranose (UDP-GalP) into uridine diphosphogalactofuranose (UDP-GalF) which is the biosynthetic precursor of galactofuranosyl residues. The polypeptide is UDP-galactopyranose mutase (rfbD) (Klebsiella pneumoniae).